The following is a 308-amino-acid chain: Leucine-rich repeat-containing protein 59 (308 aa).

The Cytoplasmic portion of the chain corresponds to 1-248; that stretch reads MARANGRSQN…LARRQSRLRK (248 aa). 5 LRR repeats span residues 10-31, 40-61, 63-84, 86-107, and 109-128; these read NLRDKLDGNELDLSLSDLSEVP, KATALDLSCNKLTSLPDDFCNL, YIVRLDLSKNQIAQLPSEFGRL, NLQHLDLLQNRIVALPVSFAQL, and SLKWLDLKDNPLKPALAKVA. The stretch at 154-223 forms a coiled coil; it reads DHERELQRKL…NNNKKKAEEE (70 aa). Composition is skewed to basic and acidic residues over residues 170–187, 194–203, and 218–237; these read KQRLEAQQRVKEEQDREL, QQKERKRRDY, and KKAEEEPSENHKPVPTPKEK. Residues 170–240 are disordered; it reads KQRLEAQQRV…VPTPKEKKLA (71 aa). The chain crosses the membrane as a helical span at residues 249 to 269; sequence IACILLFGLMVALLGVVACRF. Residues 270–308 lie on the Lumenal side of the membrane; that stretch reads TDLKTFEVCRSVNAVYKETLSALHSNPVLERFLQDPSSQ.

Interacts with SGO1.

Its subcellular location is the microsome membrane. The protein localises to the endoplasmic reticulum membrane. The protein resides in the nucleus envelope. In terms of biological role, required for nuclear import of FGF1. The protein is Leucine-rich repeat-containing protein 59 (lrrc59) of Xenopus tropicalis (Western clawed frog).